We begin with the raw amino-acid sequence, 1362 residues long: DNA-directed RNA polymerase subunit beta (1362 aa).

This sequence belongs to the RNA polymerase beta chain family. The RNAP catalytic core consists of 2 alpha, 1 beta, 1 beta' and 1 omega subunit. When a sigma factor is associated with the core the holoenzyme is formed, which can initiate transcription.

The enzyme catalyses RNA(n) + a ribonucleoside 5'-triphosphate = RNA(n+1) + diphosphate. Its function is as follows. DNA-dependent RNA polymerase catalyzes the transcription of DNA into RNA using the four ribonucleoside triphosphates as substrates. The chain is DNA-directed RNA polymerase subunit beta from Acinetobacter baylyi (strain ATCC 33305 / BD413 / ADP1).